The sequence spans 348 residues: GMP reductase 2 (348 aa).

NADP(+)-binding positions include 26–27 (SR), lysine 78, 129–131 (DVA), and 180–181 (IG). K(+) is bound by residues glycine 181, glycine 183, and cysteine 186. Residue cysteine 186 is the Thioimidate intermediate of the active site. Threonine 188 acts as the Proton donor/acceptor in catalysis. Position 189 (arginine 189) interacts with K(+). Residues 219-221 (DGG), 242-243 (GG), 268-270 (GMS), and 286-290 (RASEG) contribute to the GMP site. NADP(+) is bound by residues methionine 269 and 285 to 286 (YR). Position 291 is an N6-acetyllysine (lysine 291). Residue 314-317 (STCT) coordinates NADP(+).

It belongs to the IMPDH/GMPR family. GuaC type 1 subfamily. In terms of assembly, homotetramer.

The catalysed reaction is IMP + NH4(+) + NADP(+) = GMP + NADPH + 2 H(+). Its function is as follows. Catalyzes the irreversible NADPH-dependent deamination of GMP to IMP. It functions in the conversion of nucleobase, nucleoside and nucleotide derivatives of G to A nucleotides, and in maintaining the intracellular balance of A and G nucleotides. Plays a role in modulating cellular differentiation. The sequence is that of GMP reductase 2 from Bos taurus (Bovine).